A 174-amino-acid chain; its full sequence is Ribosome maturation factor RimM (174 aa).

The PRC barrel domain occupies 97–171; it reads EGYYYDFDII…RMVIDPIPGL (75 aa).

It belongs to the RimM family. Binds ribosomal protein uS19.

It is found in the cytoplasm. Functionally, an accessory protein needed during the final step in the assembly of 30S ribosomal subunit, possibly for assembly of the head region. Essential for efficient processing of 16S rRNA. May be needed both before and after RbfA during the maturation of 16S rRNA. It has affinity for free ribosomal 30S subunits but not for 70S ribosomes. The polypeptide is Ribosome maturation factor RimM (Symbiobacterium thermophilum (strain DSM 24528 / JCM 14929 / IAM 14863 / T)).